Reading from the N-terminus, the 63-residue chain is Large ribosomal subunit protein uL29 (63 aa).

Belongs to the universal ribosomal protein uL29 family.

In Flavobacterium psychrophilum (strain ATCC 49511 / DSM 21280 / CIP 103535 / JIP02/86), this protein is Large ribosomal subunit protein uL29.